The chain runs to 215 residues: GTP-binding protein YPT6 (215 aa).

17–24 (GEQGVGKT) is a GTP binding site. The short motif at 39 to 47 (YQATIGIDF) is the Effector region element. GTP is bound by residues 65–69 (DTAGQ) and 124–127 (NKSD). Over residues 178–196 (NSESTPLDSENANSANQNK) the composition is skewed to polar residues. Positions 178-215 (NSESTPLDSENANSANQNKPGVIDISTAEEQEQSACQC) are disordered. 2 S-geranylgeranyl cysteine lipidation sites follow: Cys213 and Cys215. The residue at position 215 (Cys215) is a Cysteine methyl ester.

It belongs to the small GTPase superfamily. Rab family. As to quaternary structure, interacts with YIF1, YIP3 and YIP4.

It localises to the cell membrane. Functionally, protein transport. Might participate in post-Golgi transport. The polypeptide is GTP-binding protein YPT6 (YPT6) (Saccharomyces cerevisiae (strain ATCC 204508 / S288c) (Baker's yeast)).